The primary structure comprises 86 residues: U1-theraphotoxin-Pc1a (86 aa).

Residues 1–21 form the signal peptide; the sequence is MMRVLIVTAVFTFFLVLTSSG. The propeptide occupies 22 to 49; sequence HDEDNEQRNILEGMFLDRAIETPKGLEE. Cystine bridges form between C53–C70, C60–C75, and C69–C80. V84 bears the Valine amide mark.

As to expression, expressed by the venom gland.

It localises to the secreted. Functionally, possesses strong antiplasmodial activity against the intra-erythrocyte stage of P.falciparum in vitro. IC(50) for inhibiting P.falciparum growth is 1.59 uM. Interacts with infected and healthy erythrocytes. Does not lyse erythrocytes, is not cytotoxic to nucleated mammalian cells, and does not inhibit neuromuscular function. Has neither antibacterial nor antifungal activity. The sequence is that of U1-theraphotoxin-Pc1a from Psalmopoeus cambridgei (Trinidad chevron tarantula).